The sequence spans 714 residues: RB-associated KRAB zinc finger protein (714 aa).

The KRAB domain occupies 8-79 (VSFKDVAVDF…GGEFPCQHSP (72 aa)). Residues Lys97 and Lys259 each participate in a glycyl lysine isopeptide (Lys-Gly) (interchain with G-Cter in SUMO2) cross-link. The tract at residues 171–260 (TYHGEKMCEF…YQRSQMEMKP (90 aa)) is required for interaction with RB1. C2H2-type zinc fingers lie at residues 261-283 (FECSECGKSFCKKSKFIIHQRAH) and 289-311 (YECNVCGKSFSQKGTLTVHRRSH). Lys315 is covalently cross-linked (Glycyl lysine isopeptide (Lys-Gly) (interchain with G-Cter in SUMO2)). 7 consecutive C2H2-type zinc fingers follow at residues 317–339 (YKCNECGKTFCQKLHLTQHLRTH), 345–367 (YECSECGKTFCQKTHLTLHQRNH), 373–395 (YPCNECGKSFSRKSALSDHQRTH), 401–423 (YKCNECGKSYYRKSTLITHQRTH), 429–451 (YQCSECGKFFSRVSYLTIHYRSH), 457–479 (YECNECGKTFNLNSAFIRHRKVH), and 485–505 (HECSECGKFSQLYLTDHHTAH). Residue Lys357 forms a Glycyl lysine isopeptide (Lys-Gly) (interchain with G-Cter in SUMO2) linkage. Residues 417–714 (ITHQRTHTGE…NMNVLDVENL (298 aa)) are interaction with AR. The C2H2-type 10; degenerate zinc-finger motif lies at 511–533 (YECNECGKTFLVNSAFDGHQPLP). Glycyl lysine isopeptide (Lys-Gly) (interchain with G-Cter in SUMO2) cross-links involve residues Lys534 and Lys537. C2H2-type zinc fingers lie at residues 539 to 561 (YECNVCGKLFNELSYYTEHYRSH), 567 to 589 (YGCSECGKTFSHNSSLFRHQRVH), 595 to 617 (YECYECGKFFSQKSYLTIHHRIH), 623 to 645 (YECSKCGKVFSRMSNLTVHYRSH), 651 to 673 (YECNECGKVFSQKSYLTVHYRTH), and 679 to 701 (YECNECGKKFHHRSAFNSHQRIH).

The protein belongs to the krueppel C2H2-type zinc-finger protein family. As to quaternary structure, interacts with AR and RB1. May also interact with other nuclear hormone receptors such as NR3C1/GR. In terms of tissue distribution, expressed in bone, brain, heart, kidney, liver, lung, pancreas and placenta.

It localises to the nucleus. May repress E2F-dependent transcription. May promote AR-dependent transcription. The protein is RB-associated KRAB zinc finger protein (RBAK) of Homo sapiens (Human).